Reading from the N-terminus, the 508-residue chain is Transcription termination factor MTERF4, chloroplastic (508 aa).

Residues Met-1–Arg-79 constitute a chloroplast transit peptide. Low complexity predominate over residues Arg-28–Pro-49. Disordered regions lie at residues Arg-28–Arg-69 and Phe-475–Glu-508. Residues Val-484–Glu-508 show a composition bias toward acidic residues.

The protein belongs to the mTERF family.

Its subcellular location is the plastid. It is found in the chloroplast stroma. Its function is as follows. Transcription termination factor required for processing and steady-state levels of plastid transcripts. Required for splicing of the chloroplastic group II intron. Required for the accumulation of 16S and 23S ribosomes. This chain is Transcription termination factor MTERF4, chloroplastic, found in Oryza sativa subsp. japonica (Rice).